The following is a 1282-amino-acid chain: Clustered mitochondria protein homolog (1282 aa).

The disordered stretch occupies residues 1 to 50 (MADASQATTPAAEGNPVPEVPETQTPPADVNGTTEQEQTEEGAEQALEDQ). The segment covering 16–36 (PVPEVPETQTPPADVNGTTEQ) has biased composition (low complexity). Over residues 37–47 (EQTEEGAEQAL) the composition is skewed to acidic residues. The region spanning 331–575 (DNTRSQETYL…RITPLDIAWM (245 aa)) is the Clu domain. A coiled-coil region spans residues 623-650 (EEKKEGEEATEEAKTEEIKTEEAEKSEE). Composition is skewed to basic and acidic residues over residues 624-661 (EKKEGEEATEEAKTEEIKTEEAEKSEEPKAEETEKTEE) and 668-680 (VAEKKDEEAAKED). Disordered regions lie at residues 624-680 (EKKE…AKED) and 913-945 (PVAEKPVAPAPAPVEDGNKKKKKKKAARETSPV). TPR repeat units lie at residues 1021–1054 (AQMYHTLSQLYYQLGQKDAAVELSRKAAIVAERT), 1063–1096 (VLNYLNLSLFLHQRGDSKEALLYARHALDLWKVI), and 1105–1138 (ITTMNNYAVMLQSIKAYHESRRWFEESLRVCNKV). The segment at 1257-1282 (VENSEKKKGGKKSKGPSNPKKRGGKA) is disordered. Positions 1264 to 1282 (KGGKKSKGPSNPKKRGGKA) are enriched in basic residues.

Belongs to the CLU family. As to quaternary structure, may associate with the eukaryotic translation initiation factor 3 (eIF-3) complex.

The protein localises to the cytoplasm. Its function is as follows. mRNA-binding protein involved in proper cytoplasmic distribution of mitochondria. This is Clustered mitochondria protein homolog from Neurospora crassa (strain ATCC 24698 / 74-OR23-1A / CBS 708.71 / DSM 1257 / FGSC 987).